The following is a 310-amino-acid chain: Cysteine synthase (310 aa).

Lys46 carries the post-translational modification N6-(pyridoxal phosphate)lysine. Pyridoxal 5'-phosphate contacts are provided by residues Asn76, 180–184 (GTGGT), and Ser268.

Belongs to the cysteine synthase/cystathionine beta-synthase family. As to quaternary structure, homodimer. Pyridoxal 5'-phosphate is required as a cofactor.

It carries out the reaction O-acetyl-L-serine + hydrogen sulfide = L-cysteine + acetate. It functions in the pathway amino-acid biosynthesis; L-cysteine biosynthesis; L-cysteine from L-serine: step 2/2. The protein is Cysteine synthase (cysK) of Staphylococcus aureus (strain Mu50 / ATCC 700699).